The primary structure comprises 192 residues: 7-methyl-GTP pyrophosphatase (192 aa).

Catalysis depends on aspartate 69, which acts as the Proton acceptor.

This sequence belongs to the Maf family. YceF subfamily. A divalent metal cation serves as cofactor.

It is found in the cytoplasm. It carries out the reaction N(7)-methyl-GTP + H2O = N(7)-methyl-GMP + diphosphate + H(+). Nucleoside triphosphate pyrophosphatase that hydrolyzes 7-methyl-GTP (m(7)GTP). May have a dual role in cell division arrest and in preventing the incorporation of modified nucleotides into cellular nucleic acids. This is 7-methyl-GTP pyrophosphatase (maf-2) from Pseudomonas putida (strain ATCC 47054 / DSM 6125 / CFBP 8728 / NCIMB 11950 / KT2440).